Here is a 463-residue protein sequence, read N- to C-terminus: Nuclear hormone receptor family member nhr-79 (463 aa).

Positions 3-81 (RGKCMVCDSP…AGMMRDLVQA (79 aa)) form a DNA-binding region, nuclear receptor. NR C4-type zinc fingers lie at residues 6 to 27 (CMVCDSPNATNYHFGAQSCKAC) and 43 to 64 (CLGDGVHSCKIDHTLRLNCRHC). The disordered stretch occupies residues 83 to 119 (REIKSDKGKNSRNSSQSEDFFSPPPEQPGPSNYFDQF). The region spanning 203-463 (YTEQVINLNM…ILKDMLKFQY (261 aa)) is the NR LBD domain.

This sequence belongs to the nuclear hormone receptor family.

The protein resides in the nucleus. Orphan nuclear receptor. The chain is Nuclear hormone receptor family member nhr-79 (nhr-79) from Caenorhabditis elegans.